Here is a 310-residue protein sequence, read N- to C-terminus: MEGIKLTLTNLEEFKCEFTLENCDISLANSLRRILLAEIETIAIHNVKVYENTSSLPDEYIAHRLGLIPLNSAKVDDYNYIWNCNCQGECDRCTIHFDLRVSNFTNEVLEVTSLDLKQRQDHTDEDAVRPIKVYSILRDEYGNKREVGIPIIKLSKGQQIHFECEAQKGIGKMHSKWNPVCISTFSVEPEIIFDQEIQNLDIEQKKALVNACPTKVFGINPHTNTLEVQDHMKCMYCEECVYKCAEDFQKPKLIKIDHKKDKFFFKVETTGVMKPVEVLRRGFSTLRQKLDFMREQIQENSNNQFEYGNE.

This sequence belongs to the archaeal Rpo3/eukaryotic RPB3 RNA polymerase subunit family.

The protein resides in the nucleus. May be a stage-specific RNA polymerase subunit. In Tetrahymena thermophila, this protein is Conjugation stage-specific protein (CNJC).